The sequence spans 122 residues: Small ribosomal subunit protein uS13 (122 aa).

A disordered region spans residues 99 to 122 (RGQRTHTNARTRKGPAKAIAGKKK).

This sequence belongs to the universal ribosomal protein uS13 family. In terms of assembly, part of the 30S ribosomal subunit. Forms a loose heterodimer with protein S19. Forms two bridges to the 50S subunit in the 70S ribosome.

In terms of biological role, located at the top of the head of the 30S subunit, it contacts several helices of the 16S rRNA. In the 70S ribosome it contacts the 23S rRNA (bridge B1a) and protein L5 of the 50S subunit (bridge B1b), connecting the 2 subunits; these bridges are implicated in subunit movement. Contacts the tRNAs in the A and P-sites. In Bradyrhizobium sp. (strain BTAi1 / ATCC BAA-1182), this protein is Small ribosomal subunit protein uS13.